The following is a 259-amino-acid chain: Dihydroorotate dehydrogenase B (NAD(+)), electron transfer subunit (259 aa).

Residues 2-102 (MQKQNMIVVN…LGPLGHGFPV (101 aa)) form the FAD-binding FR-type domain. FAD is bound by residues 53–56 (RPIS), 70–72 (LYR), and 77–78 (GT). 4 residues coordinate [2Fe-2S] cluster: Cys-221, Cys-226, Cys-229, and Cys-246.

It belongs to the PyrK family. As to quaternary structure, heterotetramer of 2 PyrK and 2 PyrD type B subunits. It depends on [2Fe-2S] cluster as a cofactor. FAD is required as a cofactor.

The protein operates within pyrimidine metabolism; UMP biosynthesis via de novo pathway; orotate from (S)-dihydroorotate (NAD(+) route): step 1/1. In terms of biological role, responsible for channeling the electrons from the oxidation of dihydroorotate from the FMN redox center in the PyrD type B subunit to the ultimate electron acceptor NAD(+). This is Dihydroorotate dehydrogenase B (NAD(+)), electron transfer subunit from Bacillus cereus (strain 03BB102).